A 1453-amino-acid chain; its full sequence is NK-tumor recognition protein (1453 aa).

Residues 10–175 (HFDIEINREP…ADVRVIDCGV (166 aa)) enclose the PPIase cyclophilin-type domain. Positions 187–625 (KKRKKPTCSE…RWKPGQKPWK (439 aa)) are disordered. Residues 195–213 (SEGSDSSSRSSSSSESSSE) are compositionally biased toward low complexity. Residues 221-240 (IRRRRHKRRPKVRHAKKRRK) are compositionally biased toward basic residues. Residues 259–286 (YSERSDVNEKRSVDSNTKREKPVVRPEE) show a composition bias toward basic and acidic residues. Residue Lys323 forms a Glycyl lysine isopeptide (Lys-Gly) (interchain with G-Cter in SUMO2) linkage. A compositionally biased stretch (basic residues) spans 329–348 (SGRKIKGRGTIRYHTPPRSR). 3 positions are modified to phosphoserine: Ser379, Ser401, and Ser416. The span at 382-402 (KWSKGDKLSDPCSSRWDERSL) shows a compositional bias: basic and acidic residues. Polar residues predominate over residues 403 to 421 (SQRSRSWSYNGYYSDLSTA). Residues 425–460 (DGHHKKHRKEKKFKHKKKAKKQKHCRRHRQTKKRRI) are compositionally biased toward basic residues. A compositionally biased stretch (basic and acidic residues) spans 514–531 (SSRDSYRSKSHSRSDSRG). 2 stretches are compositionally biased toward low complexity: residues 532 to 546 (SSRS…SRSL) and 554 to 565 (SSRSGPRRTSIS). Glycyl lysine isopeptide (Lys-Gly) (interchain with G-Cter in SUMO2) cross-links involve residues Lys576 and Lys579. Position 611 is a phosphoserine (Ser611). Lys637 participates in a covalent cross-link: Glycyl lysine isopeptide (Lys-Gly) (interchain with G-Cter in SUMO2). Ser646 carries the post-translational modification Phosphoserine. The span at 651–661 (TNIKATVSSSS) shows a compositional bias: polar residues. Residues 651 to 1453 (TNIKATVSSS…RSPSESSRYS (803 aa)) form a disordered region. Glycyl lysine isopeptide (Lys-Gly) (interchain with G-Cter in SUMO2) cross-links involve residues Lys654 and Lys664. Composition is skewed to low complexity over residues 682-726 (RSSG…SSRS) and 736-749 (SQHS…SVSS). Residues 755–772 (AMFRSNRKKSVTSHKRHR) are compositionally biased toward basic residues. The span at 773-789 (SNSEKTLHSKYVRGREK) shows a compositional bias: basic and acidic residues. The segment covering 799–809 (SRSSLDYSSDS) has biased composition (low complexity). Composition is skewed to basic and acidic residues over residues 820–852 (PEKE…ECPR) and 859–868 (KDHSRDDSVS). 4 positions are modified to phosphoserine: Ser880, Ser882, Ser884, and Ser900. Residues 887-902 (DVTKSRKSDPRRGSEK) show a composition bias toward basic and acidic residues. A compositionally biased stretch (acidic residues) spans 903–913 (EEGEASSDSES). The span at 948-958 (SSASESESSCS) shows a compositional bias: low complexity. A compositionally biased stretch (basic and acidic residues) spans 966–982 (EPQKQKHSKDDLKGDHT). The span at 983–1005 (KRAREKSKAKKDKKHKAPKRKQA) shows a compositional bias: basic residues. The span at 1030–1045 (DPKEKRHVSEKCEAVK) shows a compositional bias: basic and acidic residues. 2 positions are modified to phosphoserine: Ser1139 and Ser1148. Residues 1170-1180 (QESSMSESKTL) are compositionally biased toward polar residues. Residues 1189–1199 (SSTSVTSPVET) show a composition bias toward low complexity. Phosphoserine is present on Ser1195. Residues Lys1208 and Lys1249 each participate in a glycyl lysine isopeptide (Lys-Gly) (interchain with G-Cter in SUMO2) cross-link. Residues 1303–1453 (RSPHRSRSKS…RSPSESSRYS (151 aa)) are arg/Ser tandem repeat-rich. Residues 1322–1346 (SVSYSHSRSRSRSSTSSYRSRSYSR) show a composition bias toward low complexity. A compositionally biased stretch (basic residues) spans 1369–1379 (HSHRTSSRSRS). Positions 1380 to 1401 (RSSSYDLHSRSRSYTYDSYYSR) are enriched in low complexity. The segment covering 1416–1426 (RGRSYNRRSRS) has biased composition (basic residues).

It localises to the cell membrane. It carries out the reaction [protein]-peptidylproline (omega=180) = [protein]-peptidylproline (omega=0). With respect to regulation, inhibited by cyclosporin A (CsA). Its function is as follows. PPIase that catalyzes the cis-trans isomerization of proline imidic peptide bonds in oligopeptides and may therefore assist protein folding. Component of a putative tumor-recognition complex involved in the function of NK cells. The polypeptide is NK-tumor recognition protein (Mus musculus (Mouse)).